We begin with the raw amino-acid sequence, 268 residues long: Tryptophan synthase alpha chain (268 aa).

Active-site proton acceptor residues include Glu-49 and Asp-60.

The protein belongs to the TrpA family. Tetramer of two alpha and two beta chains.

The enzyme catalyses (1S,2R)-1-C-(indol-3-yl)glycerol 3-phosphate + L-serine = D-glyceraldehyde 3-phosphate + L-tryptophan + H2O. It functions in the pathway amino-acid biosynthesis; L-tryptophan biosynthesis; L-tryptophan from chorismate: step 5/5. Functionally, the alpha subunit is responsible for the aldol cleavage of indoleglycerol phosphate to indole and glyceraldehyde 3-phosphate. The sequence is that of Tryptophan synthase alpha chain from Citrobacter koseri (strain ATCC BAA-895 / CDC 4225-83 / SGSC4696).